The sequence spans 132 residues: UPF0047 protein YugU (132 aa).

The protein belongs to the UPF0047 family.

The protein is UPF0047 protein YugU (yugU) of Bacillus subtilis (strain 168).